The following is a 79-amino-acid chain: Cytochrome c-551 (79 aa).

A compositionally biased stretch (polar residues) spans 1-14 (DGQSIYESGTSPTC). The segment at 1–35 (DGQSIYESGTSPTCASCHDRGTAGAPKINEPGDWD) is disordered. Cys14, Cys17, His18, and Met55 together coordinate heme c.

Binds 1 heme c group covalently per subunit.

The polypeptide is Cytochrome c-551 (Halorhodospira halochloris (Ectothiorhodospira halochloris)).